The primary structure comprises 316 residues: Ribosomal RNA small subunit methyltransferase H (316 aa).

Residues 39–41 (GGH), Asp-56, Phe-82, Asp-103, and Gln-110 contribute to the S-adenosyl-L-methionine site.

Belongs to the methyltransferase superfamily. RsmH family.

Its subcellular location is the cytoplasm. The enzyme catalyses cytidine(1402) in 16S rRNA + S-adenosyl-L-methionine = N(4)-methylcytidine(1402) in 16S rRNA + S-adenosyl-L-homocysteine + H(+). Its function is as follows. Specifically methylates the N4 position of cytidine in position 1402 (C1402) of 16S rRNA. The polypeptide is Ribosomal RNA small subunit methyltransferase H (Methylacidiphilum infernorum (isolate V4) (Methylokorus infernorum (strain V4))).